The following is a 297-amino-acid chain: Acetylglutamate kinase (297 aa).

Residues Gly-68–Gly-69, Arg-90, and Asn-195 each bind substrate.

The protein belongs to the acetylglutamate kinase family. ArgB subfamily.

Its subcellular location is the cytoplasm. The enzyme catalyses N-acetyl-L-glutamate + ATP = N-acetyl-L-glutamyl 5-phosphate + ADP. Its pathway is amino-acid biosynthesis; L-arginine biosynthesis; N(2)-acetyl-L-ornithine from L-glutamate: step 2/4. Catalyzes the ATP-dependent phosphorylation of N-acetyl-L-glutamate. This is Acetylglutamate kinase from Mesorhizobium japonicum (strain LMG 29417 / CECT 9101 / MAFF 303099) (Mesorhizobium loti (strain MAFF 303099)).